Reading from the N-terminus, the 344-residue chain is L-rhamnose-proton symporter (344 aa).

The next 10 helical transmembrane spans lie at 4–24 (AITMGIFWHLIGAASAACFYA), 38–58 (WSVGGIVSWIILPWAISALLL), 68–88 (FSLSTLLPVFLFGAMWGIGNI), 101–121 (MGIGIAIGITLIVGTLMTPII), 137–157 (TLLGVLVALIGVGIVTRAGQL), 175–195 (LVLAVMCGIFSAGMSFAMNAA), 214–234 (LPSYVVIMGGGAIINLGFCFI), 259–279 (VLLSALGGLMWYLQFFFYAWG), 290–310 (ISWMLHMSFYVLCGGIVGLVL), and 323–343 (VLSLGCVVIIVAANIVGMGMA).

It belongs to the L-rhamnose transporter (TC 2.A.7.6) family.

Its subcellular location is the cell inner membrane. It carries out the reaction L-rhamnopyranose(in) + H(+)(in) = L-rhamnopyranose(out) + H(+)(out). Uptake of L-rhamnose across the cytoplasmic membrane with the concomitant transport of protons into the cell (symport system). This Escherichia coli O157:H7 protein is L-rhamnose-proton symporter.